The primary structure comprises 142 residues: Putative FK506-binding protein 9-like protein (142 aa).

The PPIase FKBP-type domain maps to 1–49 (MDMGLREMCVGEKRTVIIPPHLGYGEAGVDGEVPGSAVLVFDIELLELV). 2 consecutive EF-hand domains span residues 60-95 (WNGE…QVAS) and 105-140 (DAEL…AKQD). 5 residues coordinate Ca(2+): Asp118, Asn120, Asp122, Lys124, and Glu129.

This Homo sapiens (Human) protein is Putative FK506-binding protein 9-like protein (FKBP9P1).